Here is a 528-residue protein sequence, read N- to C-terminus: Protein MGF 505-7R (528 aa).

3 ANK repeats span residues 129-158 (ECDL…LLNV), 261-290 (HVNR…VPHK), and 292-322 (IERM…KVKN).

Belongs to the asfivirus MGF 505 family. In terms of assembly, interacts with host STING1. Interacts with host JAK1; this interaction leads to JAK1 degradation. Interacts with host JAK2; this interaction leads to JAK2 degradation. Interacts with host RELA; this interaction inhibits NF-kappa-B promoter activity.

It is found in the host cytoplasm. In terms of biological role, plays a role in virus cell tropism, and may be required for efficient virus replication in macrophages. Interferes with host NF-kappa-B promoter activity mediated by TLR8. Mechanistically, inhibits the phosphorylation and subsequent nuclear translocation of host NF-kappa-B RELA subunit downstream of TLR8. Promotes the expression of the autophagy-related protein host ULK1 to degrade host STING and inhibit the interferon response. Also inhibits JAK1- and JAK2-mediated signaling and thus negatively regulates the IFN-gamma signaling. The protein is Protein MGF 505-7R of Ornithodoros (relapsing fever ticks).